The following is a 120-amino-acid chain: NAD(P)H-quinone oxidoreductase subunit 3, chloroplastic (120 aa).

The next 3 membrane-spanning stretches (helical) occupy residues I9 to G29, M64 to M84, and V88 to L108.

The protein belongs to the complex I subunit 3 family. In terms of assembly, NDH is composed of at least 16 different subunits, 5 of which are encoded in the nucleus.

It is found in the plastid. Its subcellular location is the chloroplast thylakoid membrane. It catalyses the reaction a plastoquinone + NADH + (n+1) H(+)(in) = a plastoquinol + NAD(+) + n H(+)(out). It carries out the reaction a plastoquinone + NADPH + (n+1) H(+)(in) = a plastoquinol + NADP(+) + n H(+)(out). Its function is as follows. NDH shuttles electrons from NAD(P)H:plastoquinone, via FMN and iron-sulfur (Fe-S) centers, to quinones in the photosynthetic chain and possibly in a chloroplast respiratory chain. The immediate electron acceptor for the enzyme in this species is believed to be plastoquinone. Couples the redox reaction to proton translocation, and thus conserves the redox energy in a proton gradient. This chain is NAD(P)H-quinone oxidoreductase subunit 3, chloroplastic, found in Aethionema grandiflorum (Persian stone-cress).